The chain runs to 145 residues: Small ribosomal subunit protein bS16 (145 aa).

The tract at residues 82-145 (IKERAATNNP…EAAAEEQTEA (64 aa)) is disordered. Positions 95 to 115 (EPGKKAKERAEERAEKAREAA) are enriched in basic and acidic residues. Residues 116–137 (EAAAAAAAAPAEEAAAEAPAEA) are compositionally biased toward low complexity.

The protein belongs to the bacterial ribosomal protein bS16 family.

The sequence is that of Small ribosomal subunit protein bS16 from Novosphingobium aromaticivorans (strain ATCC 700278 / DSM 12444 / CCUG 56034 / CIP 105152 / NBRC 16084 / F199).